The primary structure comprises 508 residues: DNA-directed RNA polymerase subunit Rpo1C (508 aa).

The tract at residues 1-123 is unknown; it reads MASLLWRDTS…EIKEKYGENL (123 aa). The DNA-directed RNA polymerase subunit Rpo1C stretch occupies residues 124 to 508; sequence SEDVQKVLDD…IYKGYPKTKK (385 aa).

Belongs to the RNA polymerase beta' chain family. In terms of assembly, part of the RNA polymerase complex.

It localises to the cytoplasm. The enzyme catalyses RNA(n) + a ribonucleoside 5'-triphosphate = RNA(n+1) + diphosphate. Its function is as follows. DNA-dependent RNA polymerase (RNAP) catalyzes the transcription of DNA into RNA using the four ribonucleoside triphosphates as substrates. Forms part of the jaw domain. This is DNA-directed RNA polymerase subunit Rpo1C from Thermoplasma acidophilum (strain ATCC 25905 / DSM 1728 / JCM 9062 / NBRC 15155 / AMRC-C165).